A 324-amino-acid polypeptide reads, in one-letter code: Transmembrane protein 171 (324 aa).

Helical transmembrane passes span Ile22–Phe42, Met57–Ala77, Leu113–Val133, and Phe160–Val180. Positions Pro229–Ser239 are enriched in low complexity. Disordered stretches follow at residues Pro229–Asn248 and Tyr279–Tyr304. A compositionally biased stretch (polar residues) spans Tyr279 to Ser291.

The protein localises to the membrane. In Homo sapiens (Human), this protein is Transmembrane protein 171 (TMEM171).